We begin with the raw amino-acid sequence, 436 residues long: Prenyltransferase nscD (436 aa).

The protein belongs to the tryptophan dimethylallyltransferase family.

It functions in the pathway secondary metabolite biosynthesis. Prenyltransferase; part of the gene cluster that mediates the biosynthesis of neosartoricin B, a prenylated anthracenone that probably exhibits T-cell antiproliferative activity, suggestive of a physiological role as an immunosuppressive agent. The non-reducing polyketide synthase nscA probably synthesizes and cyclizes the decaketide backbone. The hydrolase nscB then mediates the product release through hydrolysis followed by spontaneous decarboxylation. The prenyltransferase nscD catalyzes the addition of the dimethylallyl group to the aromatic C5. The FAD-dependent monooxygenase nscC is then responsible for the stereospecific hydroxylation at C2. Neosartoricin B can be converted into two additional compounds neosartoricins C and D. Neosartoricin C is a spirocyclic compound that is cyclized through the attack of C3 hydroxyl on C14, followed by dehydration. On the other hand, neosartoricin D is a further cyclized compound in which attack of C2 on C14 in neosartoricin C results in the formation of the acetal-containing dioxabicyclo-octanone ring. Both of these compounds are novel and possibly represent related metabolites of the gene cluster. The protein is Prenyltransferase nscD of Trichophyton rubrum (strain ATCC MYA-4607 / CBS 118892) (Athlete's foot fungus).